The primary structure comprises 1459 residues: MSDREFVTVDPVTIIIKECINLSTAMRKYSKFTSQSGVAALLGGGSEIFSNQDDYLAHTFNNLNTNKHNDPFLSGFIQLRLMLNKLKNLDNIDSLTILQPFLLIVSTSSISGYITSLALDSLQKFFTLNIINESSQNYIGAHRATVNALTHCRFEGSQQLSDDSVLLKVVFLLRSIVDSPYGDLLSNSIIYDVLQTILSLACNNRRSEVLRNAAQSTMIAVTVKIFSKLKTIEPVNVNQIYINDESYTNDVLKADTIGTNVESKEEGSQEDPIGMKVNNEEAISEDDGIEEEHIHSEKSTNGAEQLDIVQKTTRSNSRIQAYADDNYGLPVVRQYLNLLLSLIAPENELKHSYSTRIFGLELIQTALEISGDRLQLYPRLFTLISDPIFKSILFIIQNTTKLSLLQATLQLFTTLVVILGNNLQLQIELTLTRIFSILLDDGTANNSSSENKNKPSIIKELLIEQISILWTRSPSFFTSTFINFDCNLDRADVSINFLKALTKLALPESALTTTESVPPICLEGLVSLVDDMFDHMKDIDREEFGRQKNEMEILKKRDRKTEFIECTNAFNEKPKKGIPMLIEKGFIASDSDKDIAEFLFNNNNRMNKKTIGLLLCHPDKVSLLNEYIRLFDFSGLRVDEAIRILLTKFRLPGESQQIERIIEAFSSAYCENQDYDPSKISDNAEDDISTVQPDADSVFILSYSIIMLNTDLHNPQVKEHMSFEDYSGNLKGCCNHKDFPFWYLDRIYCSIRDKEIVMPEEHHGNEKWFEDAWNNLISSTTVITEIKKDTQSVMDKLTPLELLNFDRAIFKQVGPSIVSTLFNIYVVASDDHISTRMITSLDKCSYISAFFDFKDLFNDILNSIAKGTTLINSSHDDELSTLAFEYGPMPLVQIKFEDTNTEIPVSTDAVRFGRSFKGQLNTVVFFRIIRRNKDPKIFSKELWLNIVNIILTLYEDLILSPDIFPDLQKRLKLSNLPKPSPEISINKSKESKGLLSTFASYLKGDEEPTEEEIKSSKKAMECIKSSNIAASVFGNESNITADLIKTLLDSAKTEKNADNSRYFEAELLFIIELTIALFLFCKEEKELGKFILQKVFQLSHTKGLTKRTVRRMLTYKILLISLCADQTEYLSKLINDELLKKGDIFTQKFFATNQGKEFLKRLFSLTESEFYRGFLLGNENFWKFLRKVTAMKEQSESIFEYLNESIKTDSNILTNENFMWVLGLLDEISSMGAVGNHWEIEYKKLTESGHKIDKENPYKKSIELSLKSIQLTSHLLEDNNDLRKNEIFAIIQALAHQCINPCKQISEFAVVTLEQTLINKIEIPTNEMESVEELIEGGLLPLLNSSETQEDQKILISSILTIISNVYLHYLKLGKTSNETFLKILSIFNKFVEDSDIEKKLQQLILDKKSIEKGNGSSSHGSAHEQTPESNDVEIEATAPIDDNTDDDNKPKLSDVEKD.

Serine 46 and serine 284 each carry phosphoserine. One can recognise an SEC7 domain in the interval 570–714; it reads FNEKPKKGIP…IIMLNTDLHN (145 aa). Positions 1412–1459 are disordered; that stretch reads EKGNGSSSHGSAHEQTPESNDVEIEATAPIDDNTDDDNKPKLSDVEKD. Basic and acidic residues predominate over residues 1447–1459; that stretch reads DDNKPKLSDVEKD.

Interacts (via SEC7 domain) with DRS2 (via C-terminus); the interaction is direct. Interacts with GMH1.

The protein localises to the cytoplasm. It localises to the cytosol. The protein resides in the membrane. It is found in the golgi apparatus membrane. Activates the ARF proteins by exchanging bound GDP for free GTP. Plays a role in maintaining mitochondrial morphology. Stimulates DRS2 flippase activity. This Saccharomyces cerevisiae (strain ATCC 204508 / S288c) (Baker's yeast) protein is ARF guanine-nucleotide exchange factor 2 (GEA2).